Consider the following 184-residue polypeptide: Acyl-homoserine-lactone synthase (184 aa).

Belongs to the autoinducer synthase family.

It carries out the reaction a fatty acyl-[ACP] + S-adenosyl-L-methionine = an N-acyl-L-homoserine lactone + S-methyl-5'-thioadenosine + holo-[ACP] + H(+). Involved in the synthesis of the acyl-homoserine lactone (AHL) signal N-(3-hydroxydodecanoyl)-L-HSL (3-hydroxy-C(12)-HSL or OH-dDHL). Required for normal biofilm development. This chain is Acyl-homoserine-lactone synthase, found in Acinetobacter baumannii.